The sequence spans 564 residues: MRSTGYLLTLSAAFQVAQAAVTANNSQLLTWWHNTGEINTQTPVADGNVRQSGLYSVKVQTTPASSSLYYDSFVYLAIPGNGMSDQLQYTQGYNQTQAWTSFLYSHDATVKISRNGSSANSNVVIRPTSLNFPVRYDNQSVYITVPYSPTGYRFSVEFDDDLISLAPSGARQPENALLIFASPFENSSTKPQPGSPNSIAPAPGRVLGLNTTSASTVVFNPGVYYFTGHDHMVLSSSVTWVYFAPGAYVKGAVEFLSTASEVKASGHGVLSGEQYVWYADPDEGYQKASGANNNGLRMWRGTLGNSSQTFVLNGVTVSAPPFNSMDWSGNSLDLITCRVDDYKQVGAFYGQTDGLEMYPGTILQDVFYHTDDDGLKMYYSNVTARNIVMWKESVAPVVEFGWTPRNTENVLFDNVDVIHQAYANAGNNPGIFGAVNNYLYAPDGLSSNHSTGNSNMTVRNITWSNFRAEGSSSALFRINPIQNLDNISIKNVSIESFEPLSINTTESWMPVWYDLNNGKQITVTDFSIEGFTVGNTTITASNAASVGRIDGVDPAYAGSVHYID.

An N-terminal signal peptide occupies residues 1-19 (MRSTGYLLTLSAAFQVAQA). Residues Asn-24, Asn-94, Asn-115, Asn-138, Asn-186, Asn-210, Asn-305, Asn-381, Asn-448, Asn-455, Asn-460, Asn-486, Asn-491, Asn-503, and Asn-535 are each glycosylated (N-linked (GlcNAc...) asparagine).

N-glycosylated.

The protein resides in the secreted. It carries out the reaction Hydrolysis of pullulan to isopanose (6-alpha-maltosylglucose).. In terms of biological role, hydrolyzes pullulan, a linear polymer which is composed of maltotriose units with alpha-1,6 glucosidic linkages, to produce isopanose (Glca1-4Glca1-6Glc). This chain is Isopullulanase (ipuA), found in Aspergillus niger.